Here is a 560-residue protein sequence, read N- to C-terminus: Calcium-binding and coiled-coil domain-containing protein 1-A (560 aa).

2 coiled-coil regions span residues 156-192 (KATFLQNQLEMAQKERNDLMRARLALEEEVISKEKRI) and 367-480 (WWQE…DKML). The segment at 480–517 (LMEDKTDSSPPTLSVDLSDSDDESPGDEGVSQQLGPCS) is disordered. The segment covering 487–496 (SSPPTLSVDL) has biased composition (low complexity).

Belongs to the CALCOCO family.

The protein resides in the cytoplasm. It localises to the nucleus. May function as a coactivator for aryl hydrocarbon and nuclear receptors. This chain is Calcium-binding and coiled-coil domain-containing protein 1-A (calcoco1-a), found in Xenopus laevis (African clawed frog).